The primary structure comprises 267 residues: L-aspartate dehydrogenase (267 aa).

Positions 124 and 190 each coordinate NAD(+). Residue His-220 is part of the active site.

This sequence belongs to the L-aspartate dehydrogenase family.

The enzyme catalyses L-aspartate + NADP(+) + H2O = oxaloacetate + NH4(+) + NADPH + H(+). It carries out the reaction L-aspartate + NAD(+) + H2O = oxaloacetate + NH4(+) + NADH + H(+). It participates in cofactor biosynthesis; NAD(+) biosynthesis; iminoaspartate from L-aspartate (dehydrogenase route): step 1/1. Functionally, specifically catalyzes the NAD or NADP-dependent dehydrogenation of L-aspartate to iminoaspartate. This Polaromonas sp. (strain JS666 / ATCC BAA-500) protein is L-aspartate dehydrogenase.